Reading from the N-terminus, the 790-residue chain is Nuclear cap-binding protein subunit 1 (790 aa).

The disordered stretch occupies residues 1–26 (MSRRRHSDENDGGQPHKRRKTSDANE). The Nuclear localization signal motif lies at 3 to 20 (RRRHSDENDGGQPHKRRK). At Ser7 the chain carries Phosphoserine; by RPS6KB1. Thr21 bears the Phosphothreonine; by RPS6KB1 mark. Residue Ser22 is modified to Phosphoserine; by RPS6KB1. An MIF4G domain is found at 28-240 (EDHLESLICK…CLWAQIQKLK (213 aa)). Phosphoserine is present on Ser201. The residue at position 204 (Lys204) is an N6-acetyllysine. Residues 643 to 713 (STIRKMNKHV…SEQKNLFLVI (71 aa)) adopt a coiled-coil conformation. Residue Lys684 forms a Glycyl lysine isopeptide (Lys-Gly) (interchain with G-Cter in SUMO2) linkage. Position 698 is an N6-acetyllysine (Lys698).

This sequence belongs to the NCBP1 family. In terms of assembly, component of the nuclear cap-binding complex (CBC), a heterodimer composed of NCBP1/CBP80 and NCBP2/CBP20 that interacts with m7GpppG-capped RNA. Found in a U snRNA export complex containing PHAX/RNUXA, NCBP1/CBP80, NCBP2/CBP20, RAN, XPO1 and m7G-capped RNA. Identified in a IGF2BP1-dependent mRNP granule complex containing untranslated mRNAs. Interacts with PHAX/RNUXA, SRRT/ARS2, EIF4G2, IGF2BP1, HNRNPF, HNRNPH1, KIAA0427/CTIF, PARN, DROSHA, UPF1 and ALYREF/THOC4. May interact with EIF4G1; the interaction is however controversial since it is reported by PubMed:11340157, PubMed:15059963 and PubMed:15361857, but is not observed by PubMed:19648179. The large PER complex involved in the repression of transcriptional termination is composed of at least PER2, CDK9, DDX5, DHX9, NCBP1/CBP80 and POLR2A. Component of an alternative nuclear cap-binding complex (CBC) composed of NCBP1/CBP80 and NCBP3. Interacts with METTL3. Interacts with ZFC3H1 in a RNase-insensitive manner. Interacts with MTREX. Interacts with TASOR. Interacts with DHX34; the interaction is RNA-dependent. Interacts with KPNA3. In terms of processing, dephosphorylated at Thr-21 by the PNUTS-PP1 complex during RNA polymerase II transcription pause-release.

The protein resides in the nucleus. It localises to the cytoplasm. In terms of biological role, component of the cap-binding complex (CBC), which binds cotranscriptionally to the 5'-cap of pre-mRNAs and is involved in various processes such as pre-mRNA splicing, translation regulation, nonsense-mediated mRNA decay, RNA-mediated gene silencing (RNAi) by microRNAs (miRNAs) and mRNA export. The CBC complex is involved in mRNA export from the nucleus via its interaction with ALYREF/THOC4/ALY, leading to the recruitment of the mRNA export machinery to the 5'-end of mRNA and to mRNA export in a 5' to 3' direction through the nuclear pore. The CBC complex is also involved in mediating U snRNA and intronless mRNAs export from the nucleus. The CBC complex is essential for a pioneer round of mRNA translation, before steady state translation when the CBC complex is replaced by cytoplasmic cap-binding protein eIF4E. The pioneer round of mRNA translation mediated by the CBC complex plays a central role in nonsense-mediated mRNA decay (NMD), NMD only taking place in mRNAs bound to the CBC complex, but not on eIF4E-bound mRNAs. The CBC complex enhances NMD in mRNAs containing at least one exon-junction complex (EJC) via its interaction with UPF1, promoting the interaction between UPF1 and UPF2. The CBC complex is also involved in 'failsafe' NMD, which is independent of the EJC complex, while it does not participate in Staufen-mediated mRNA decay (SMD). During cell proliferation, the CBC complex is also involved in microRNAs (miRNAs) biogenesis via its interaction with SRRT/ARS2 and is required for miRNA-mediated RNA interference. The CBC complex also acts as a negative regulator of PARN, thereby acting as an inhibitor of mRNA deadenylation. In the CBC complex, NCBP1/CBP80 does not bind directly capped RNAs (m7GpppG-capped RNA) but is required to stabilize the movement of the N-terminal loop of NCBP2/CBP20 and lock the CBC into a high affinity cap-binding state with the cap structure. Associates with NCBP3 to form an alternative cap-binding complex (CBC) which plays a key role in mRNA export and is particularly important in cellular stress situations such as virus infections. The conventional CBC with NCBP2 binds both small nuclear RNA (snRNA) and messenger (mRNA) and is involved in their export from the nucleus whereas the alternative CBC with NCBP3 does not bind snRNA and associates only with mRNA thereby playing a role only in mRNA export. NCBP1/CBP80 is required for cell growth and viability. The protein is Nuclear cap-binding protein subunit 1 (NCBP1) of Homo sapiens (Human).